The following is a 701-amino-acid chain: CRS2-associated factor 1, chloroplastic (701 aa).

The N-terminal 37 residues, 1–37 (MSLKLNTPFPIFAPSLFPNHNPRAPSEIRFSRWGNAN), are a transit peptide targeting the chloroplast. 2 disordered regions span residues 68 to 136 (VHTH…PEVK) and 191 to 221 (LPQS…QKPG). 2 CRM domains span residues 241–337 (EPLT…TRPR) and 359–455 (EGLT…LTTP). The interval 471–532 (LPEDDEPSVS…SLQSWSTKDV (62 aa)) is disordered. Composition is skewed to polar residues over residues 479 to 492 (VSPN…QNPP) and 520 to 530 (TINSLQSWSTK). The interval 564 to 586 (RVLILMKQAVESGTALVLDAADL) is CRS2 binding.

Interacts with CRS2 and RNA. Part of large ribonucleo-protein complexes that include group IIB introns, CRS2 and CAF1.

It is found in the plastid. Its subcellular location is the chloroplast stroma. Its function is as follows. Required for the splicing of group IIB introns in chloroplasts. Forms splicing particles with CRS2. Interacts with RNA and confers intron specificity of the splicing particles. This is CRS2-associated factor 1, chloroplastic from Arabidopsis thaliana (Mouse-ear cress).